The chain runs to 200 residues: Adenylate kinase (200 aa).

ATP is bound at residue Gly10–Thr15. The NMP stretch occupies residues Ser30–Val59. Residues Thr31, Arg36, Gly57–Val59, Gly85–Arg88, and Gln92 contribute to the AMP site. The segment at Lys126 to Asp142 is LID. Arg127 lines the ATP pocket. 2 residues coordinate AMP: Arg139 and Arg150. Lys178 lines the ATP pocket.

This sequence belongs to the adenylate kinase family. As to quaternary structure, monomer.

Its subcellular location is the cytoplasm. The enzyme catalyses AMP + ATP = 2 ADP. The protein operates within purine metabolism; AMP biosynthesis via salvage pathway; AMP from ADP: step 1/1. Its function is as follows. Catalyzes the reversible transfer of the terminal phosphate group between ATP and AMP. Plays an important role in cellular energy homeostasis and in adenine nucleotide metabolism. The polypeptide is Adenylate kinase (Methylorubrum populi (strain ATCC BAA-705 / NCIMB 13946 / BJ001) (Methylobacterium populi)).